We begin with the raw amino-acid sequence, 601 residues long: Potassium channel KAT2 (601 aa).

Residues 1–42 are Cytoplasmic-facing; it reads METISNIFHNDPLPPLGARANQSIKLRKFIISPYDSRYRTWE. Residues 43 to 63 form a helical membrane-spanning segment; it reads TFLLVLVVYSAWICPFELAYL. The Extracellular segment spans residues 64-71; the sequence is RNLSWKVS. A helical membrane pass occupies residues 72 to 92; it reads LVDNIIDSFFAIDIILTFFLA. The Cytoplasmic segment spans residues 93–112; it reads YLDQKSYLLVDDPKRIVARY. Residues 113-133 form a helical membrane-spanning segment; sequence FSSWFLFDVCSTIPYQLLGQI. Residues 134 to 144 lie on the Extracellular side of the membrane; the sequence is FKKHENGLAYR. A helical; Voltage-sensor membrane pass occupies residues 145–165; sequence LLSMLRLWRLRRLSELFARLE. Residues 166–179 lie on the Cytoplasmic side of the membrane; it reads KDIRLNYYWIRCTK. A helical transmembrane segment spans residues 180-200; the sequence is LISVTLFAVHCSGCFNYLIAD. The Extracellular segment spans residues 201-227; it reads RYPNPARTWIGAAIPNYRSQNLWVRYV. Positions 228–247 form an intramembrane region, pore-forming; it reads TAIYWSITTLTTTGYGDLHA. The Extracellular segment spans residues 248-251; sequence ENQR. Residues 252–272 form a helical membrane-spanning segment; it reads EMLFSICYMLFNLGLTAYLIG. Topologically, residues 273 to 601 are cytoplasmic; the sequence is NMTNLVVQGS…DGDHLFFMEI (329 aa). 356–475 is an a nucleoside 3',5'-cyclic phosphate binding site; sequence LFHGVSFTCM…RVILNNLSQK (120 aa). The region spanning 530-601 is the KHA domain; the sequence is RVTIHMYSQR…DGDHLFFMEI (72 aa).

Belongs to the potassium channel family. Plant (TC 1.A.1.4) subfamily.

It is found in the membrane. Its function is as follows. Probable inward-rectifying potassium channel. Assuming opened or closed conformations in response to the voltage difference across the membrane, the channel is activated by hyperpolarization. This Oryza sativa subsp. japonica (Rice) protein is Potassium channel KAT2.